The primary structure comprises 305 residues: RxLR effector protein PexRD25 (305 aa).

The signal sequence occupies residues 1–16 (MRFLFYMLLACSAVVA). The RxLR-dEER motif lies at 44-56 (RLLRDRRSVDEER).

Belongs to the RxLR effector family.

It localises to the secreted. It is found in the host nucleus. The protein resides in the host nucleolus. Effector that enhances P.infestans colonization of Nicotiana benthamiana leaves. The polypeptide is RxLR effector protein PexRD25 (Phytophthora infestans (strain T30-4) (Potato late blight agent)).